We begin with the raw amino-acid sequence, 645 residues long: 1-phosphatidylinositol 4,5-bisphosphate phosphodiesterase zeta-1 (645 aa).

The EF-hand domain occupies 42 to 77 (CHFAHVKRIFKENDRHNQGRITTEDFRTIYRCIVHR). One can recognise a PI-PLC X-box domain in the interval 162–306 (QDMNKPLNDY…LKFKILVKNK (145 aa)). Catalysis depends on residues His177 and His222. A PI-PLC Y-box domain is found at 385 to 501 (LSDLVIYTKA…GYVLKPDFLR (117 aa)). A C2 domain is found at 501 to 625 (RDTTLGFNPN…KGYRRVPLFS (125 aa)).

As to quaternary structure, interacts via its C2 domain with PtdIns(3)P and, to a lesser extent, PtdIns(5)P in vitro. Requires Ca(2+) as cofactor.

Its subcellular location is the nucleus. The protein resides in the cytoplasm. The protein localises to the perinuclear region. The enzyme catalyses a 1,2-diacyl-sn-glycero-3-phospho-(1D-myo-inositol-4,5-bisphosphate) + H2O = 1D-myo-inositol 1,4,5-trisphosphate + a 1,2-diacyl-sn-glycerol + H(+). Functionally, the production of the second messenger molecules diacylglycerol (DAG) and inositol 1,4,5-trisphosphate (IP3) is mediated by activated phosphatidylinositol-specific phospholipase C enzymes. In vitro, hydrolyzes PtdIns(4,5)P2 in a Ca(2+)-dependent manner. Triggers intracellular Ca(2+) oscillations in oocytes solely during M phase and is involved in inducing oocyte activation and initiating embryonic development up to the blastocyst stage. Is therefore a strong candidate for the egg-activating soluble sperm factor that is transferred from the sperm into the egg cytoplasm following gamete membrane fusion. May exert an inhibitory effect on phospholipase-C-coupled processes that depend on calcium ions and protein kinase C, including CFTR trafficking and function. The chain is 1-phosphatidylinositol 4,5-bisphosphate phosphodiesterase zeta-1 from Rattus norvegicus (Rat).